Here is a 166-residue protein sequence, read N- to C-terminus: Regulatory protein RecX (166 aa).

The protein belongs to the RecX family.

Its subcellular location is the cytoplasm. Its function is as follows. Modulates RecA activity. This is Regulatory protein RecX from Escherichia coli O139:H28 (strain E24377A / ETEC).